The following is a 272-amino-acid chain: 3-methyl-2-oxobutanoate hydroxymethyltransferase (272 aa).

Mg(2+) contacts are provided by aspartate 43 and aspartate 82. 3-methyl-2-oxobutanoate contacts are provided by residues 43-44, aspartate 82, and lysine 112; that span reads DS. Residue glutamate 114 participates in Mg(2+) binding. Glutamate 179 (proton acceptor) is an active-site residue.

Belongs to the PanB family. Homodecamer; pentamer of dimers. Mg(2+) is required as a cofactor.

Its subcellular location is the cytoplasm. The catalysed reaction is 3-methyl-2-oxobutanoate + (6R)-5,10-methylene-5,6,7,8-tetrahydrofolate + H2O = 2-dehydropantoate + (6S)-5,6,7,8-tetrahydrofolate. It functions in the pathway cofactor biosynthesis; (R)-pantothenate biosynthesis; (R)-pantoate from 3-methyl-2-oxobutanoate: step 1/2. Its function is as follows. Catalyzes the reversible reaction in which hydroxymethyl group from 5,10-methylenetetrahydrofolate is transferred onto alpha-ketoisovalerate to form ketopantoate. The protein is 3-methyl-2-oxobutanoate hydroxymethyltransferase of Staphylococcus aureus (strain Newman).